The chain runs to 128 residues: Capsid protein (128 aa).

RNA-binding residues include Arg-40, Arg-46, Ala-53, Arg-55, Lys-59, Asp-61, Val-84, Ser-86, and Thr-90.

This sequence belongs to the Leviviricetes capsid protein family. As to quaternary structure, homodimer. The dimers in the capsid are covalently linked with disulfide bridges. The homodimers binds to the viral RNA via an operator hairpin, but also to many other RNA sequences in the viral genome; this interaction probably shifts the virus from the replicative to the assembly phase and ensures specific encapsidation of the viral genome.

Its subcellular location is the virion. Its function is as follows. Capsid protein self-assembles to form an icosahedral capsid with a T=3 symmetry, about 26 nm in diameter, and consisting of 89 capsid proteins dimers (178 capsid proteins). Involved in viral genome encapsidation through the interaction between a capsid protein dimer and the multiple packaging signals present in the RNA genome. Acts as a translational repressor of viral replicase synthesis late in infection. This latter function is the result of capsid protein interaction with an RNA hairpin which contains the replicase ribosome-binding site. In Pseudomonas aeruginosa (Bacteriophage PP7), this protein is Capsid protein.